Here is a 128-residue protein sequence, read N- to C-terminus: Small ribosomal subunit protein eS8 (128 aa).

Positions methionine 1–aspartate 41 are disordered.

It belongs to the eukaryotic ribosomal protein eS8 family. In terms of assembly, part of the 30S ribosomal subunit.

The polypeptide is Small ribosomal subunit protein eS8 (Sulfolobus acidocaldarius (strain ATCC 33909 / DSM 639 / JCM 8929 / NBRC 15157 / NCIMB 11770)).